Reading from the N-terminus, the 100-residue chain is Small ribosomal subunit protein uS14 (100 aa).

Belongs to the universal ribosomal protein uS14 family. As to quaternary structure, part of the 30S ribosomal subunit. Contacts proteins S3 and S10.

In terms of biological role, binds 16S rRNA, required for the assembly of 30S particles and may also be responsible for determining the conformation of the 16S rRNA at the A site. The sequence is that of Small ribosomal subunit protein uS14 from Thermosynechococcus vestitus (strain NIES-2133 / IAM M-273 / BP-1).